The chain runs to 116 residues: SPbeta prophage-derived uncharacterized protein YoqA (116 aa).

This chain is SPbeta prophage-derived uncharacterized protein YoqA (yoqA), found in Bacillus subtilis (strain 168).